The primary structure comprises 215 residues: 3-isopropylmalate dehydratase small subunit (215 aa).

This sequence belongs to the LeuD family. LeuD type 1 subfamily. As to quaternary structure, heterodimer of LeuC and LeuD.

It carries out the reaction (2R,3S)-3-isopropylmalate = (2S)-2-isopropylmalate. It participates in amino-acid biosynthesis; L-leucine biosynthesis; L-leucine from 3-methyl-2-oxobutanoate: step 2/4. Catalyzes the isomerization between 2-isopropylmalate and 3-isopropylmalate, via the formation of 2-isopropylmaleate. This is 3-isopropylmalate dehydratase small subunit from Marinobacter nauticus (strain ATCC 700491 / DSM 11845 / VT8) (Marinobacter aquaeolei).